The sequence spans 452 residues: Selenide, water dikinase 2 (452 aa).

Ala-2 is subject to N-acetylalanine. Ser-49 carries the phosphoserine modification. The active site involves Sec-63. Residue Sec-63 is a non-standard amino acid, selenocysteine. Lys-66 serves as a coordination point for ATP. The segment at 86-111 (PPLTSGLVGGQEETVQEGGLSTRPGP) is disordered. The segment covering 95–105 (GQEETVQEGGL) has biased composition (low complexity). Residues 121–123 (GMD), Asp-141, Asp-164, and 215–218 (GGQT) each bind ATP. Asp-123 is a Mg(2+) binding site. Residue Asp-164 participates in Mg(2+) binding. A Mg(2+)-binding site is contributed by Asp-319.

This sequence belongs to the selenophosphate synthase 1 family. Class I subfamily. As to quaternary structure, homodimer. Mg(2+) serves as cofactor. Post-translationally, truncated SEPHS2 proteins produced by failed UGA/Sec decoding are ubiquitinated by the CRL2(KLHDC3) complex, which recognizes the glycine (Gly) at the C-terminus of truncated SEPHS2 proteins.

The catalysed reaction is hydrogenselenide + ATP + H2O = selenophosphate + AMP + phosphate + 2 H(+). Synthesizes selenophosphate from selenide and ATP. The sequence is that of Selenide, water dikinase 2 (Sephs2) from Mus musculus (Mouse).